Reading from the N-terminus, the 617-residue chain is Chaperone protein DnaK (617 aa).

Thr-174 carries the post-translational modification Phosphothreonine; by autocatalysis. The segment covering 575–592 (AQAQQQAQQQAQGQQGAQ) has biased composition (low complexity). Residues 575–617 (AQAQQQAQQQAQGQQGAQTDNQTGQNDGKTIDVDYEEVDDDDK) are disordered. Positions 593 to 602 (TDNQTGQNDG) are enriched in polar residues. A compositionally biased stretch (acidic residues) spans 607 to 617 (VDYEEVDDDDK).

The protein belongs to the heat shock protein 70 family.

In terms of biological role, acts as a chaperone. The sequence is that of Chaperone protein DnaK from Halothermothrix orenii (strain H 168 / OCM 544 / DSM 9562).